A 433-amino-acid polypeptide reads, in one-letter code: Ectonucleoside triphosphate diphosphohydrolase 5 (433 aa).

Positions 1-24 (MATTWGAAFFMLVASCVCSTVFHR) are cleaved as a signal peptide. Glu172 acts as the Proton acceptor in catalysis. A glycan (N-linked (GlcNAc...) asparagine) is linked at Asn232. 2 cysteine pairs are disulfide-bonded: Cys272–Cys308 and Cys368–Cys382.

The protein belongs to the GDA1/CD39 NTPase family. In terms of assembly, monomer; active form. Homodimer; disulfide-linked. Homodimers are enzymatically inactive. It depends on Ca(2+) as a cofactor. The cofactor is Mg(2+). In terms of processing, N-glycosylated; high-mannose type.

It is found in the endoplasmic reticulum. The protein localises to the secreted. It catalyses the reaction a ribonucleoside 5'-diphosphate + H2O = a ribonucleoside 5'-phosphate + phosphate + H(+). It carries out the reaction GDP + H2O = GMP + phosphate + H(+). The enzyme catalyses UDP + H2O = UMP + phosphate + H(+). The catalysed reaction is IDP + H2O = IMP + phosphate + H(+). It catalyses the reaction CDP + H2O = CMP + phosphate + H(+). It carries out the reaction ADP + H2O = AMP + phosphate + H(+). Its pathway is protein modification; protein glycosylation. Functionally, hydrolyzes nucleoside diphosphates with a preference for GDP, IDP and UDP compared to ADP and CDP. In the lumen of the endoplasmic reticulum, hydrolyzes UDP that acts as an end-product feedback inhibitor of the UDP-Glc:glycoprotein glucosyltransferases. UMP can be transported back by an UDP-sugar antiporter to the cytosol where it is consumed to regenerate UDP-glucose. Therefore, it positively regulates protein reglucosylation by clearing UDP from the ER lumen and by promoting the regeneration of UDP-glucose. Protein reglucosylation is essential to proper glycoprotein folding and quality control in the ER. The chain is Ectonucleoside triphosphate diphosphohydrolase 5 (ENTPD5) from Ailuropoda melanoleuca (Giant panda).